A 273-amino-acid polypeptide reads, in one-letter code: Alkaline ceramidase 1 (273 aa).

Over 1–36 (MHVPGTRAKMSSIFAYQSSEVDWCESNFQHSELVAE) the chain is Lumenal. Ca(2+) contacts are provided by aspartate 22, tryptophan 23, glutamate 25, asparagine 27, and glutamate 36. A helical transmembrane segment spans residues 37–57 (FYNTFSNVFFLIFGPLMMFLM). At 58 to 72 (HPYAQKRTRCFYGVS) the chain is on the cytoplasmic side. Helical transmembrane passes span 73 to 93 (VLFM…SFLG) and 94 to 114 (QLLD…VWLP). Residue histidine 86 coordinates Zn(2+). The Cytoplasmic segment spans residues 115–126 (RCYFPKFVKGNR). A helical transmembrane segment spans residues 127–147 (FYFSCLVTITTIISTFLTFVK). The Lumenal portion of the chain corresponds to 148–149 (PT). A helical membrane pass occupies residues 150–167 (VNAYALNSIAIHILYIVR). Over 168–177 (TEYKKIRDDD) the chain is Cytoplasmic. Residues 178–198 (LRHLIAVSVVLWAAALTSWIS) traverse the membrane as a helical segment. Residues 199 to 215 (DRVLCSFWQRIHFYYLH) are Lumenal-facing. Zn(2+)-binding residues include histidine 215 and histidine 219. The chain crosses the membrane as a helical span at residues 216 to 236 (SIWHVLISITFPYGIVTMALV). Residues 237–273 (DAKYEMPDKTLKVHYWPRDSWVIGLPYVEIQENDKNC) are Cytoplasmic-facing.

This sequence belongs to the alkaline ceramidase family. Requires Zn(2+) as cofactor. In terms of tissue distribution, highly expressed in skin. Weakly or not expressed in other tissues. Expressed by granular layer of interfollicular epidermis, sebaceous glands and infundibulum.

It is found in the endoplasmic reticulum membrane. It carries out the reaction an N-acylsphing-4-enine + H2O = sphing-4-enine + a fatty acid. The catalysed reaction is N-tetracosanoyl-sphing-4-enine + H2O = tetracosanoate + sphing-4-enine. The enzyme catalyses an N-acylsphinganine + H2O = sphinganine + a fatty acid. It catalyses the reaction N-(9Z-octadecenoyl)-sphing-4-enine + H2O = sphing-4-enine + (9Z)-octadecenoate. It carries out the reaction N-(15Z-tetracosenoyl)-sphing-4-enine + H2O = (15Z)-tetracosenoate + sphing-4-enine. Its pathway is lipid metabolism; sphingolipid metabolism. Its activity is regulated as follows. Inhibited by sphingosine. Inhibited by Mn(2+), Zn(2+), and Cu(2+) in a dose-dependent manner. Slightly activated by Ca(2+) in a dose-dependent manner. Endoplasmic reticulum ceramidase that catalyzes the hydrolysis of ceramides into sphingosine and free fatty acids at alkaline pH. Ceramides, sphingosine, and its phosphorylated form sphingosine-1-phosphate are bioactive lipids that mediate cellular signaling pathways regulating several biological processes including cell proliferation, apoptosis and differentiation. Exhibits a strong substrate specificity towards the natural stereoisomer of ceramides with D-erythro-sphingosine as a backbone and has a higher activity towards very long-chain unsaturated fatty acids like the C24:1-ceramide. May also hydrolyze dihydroceramides to produce dihydrosphingosine. ACER1 is a skin-specific ceramidase that regulates the levels of ceramides, sphingosine and sphingosine-1-phosphate in the epidermis, mediates the calcium-induced differentiation of epidermal keratinocytes and more generally plays an important role in skin homeostasis. The chain is Alkaline ceramidase 1 from Mus musculus (Mouse).